The sequence spans 393 residues: MNHSPNQSRPVSIMRRFLDSESAGGVSLMVAAALALIVANSPFSQAYFDILHTHIGPLSLTDWINDALMAVFFLLVGLEIKREFLDGQLASWPNRMLPGIAAAGGVILPAIIFTAFNWHDPAKVRGWAVPSATDIAFALGVLSLLGSRVPSSLKVFLATLAILDDLAAVVIIAIFYTAEISMPYLGGAFAAAIVLFVMNRMGVMKLLPYLIGGAALWFFVLNSGVHATVAGVVTALMIPLKAAPGRPDDMTSPLHVLEHALAKPVAFIIVPIFGFANAGISFAGLDASVMRDTLTLGIMLGLFIGKQLGVFGAAWLAIKTGLAQKPLGATWIQLYGVAVLCGIGFTMSIFIGLLSFPSDLMQAETKIGVLAGSGLSAICGYILLRLVTKPKNT.

Transmembrane regions (helical) follow at residues 23–43, 58–78, 96–116, 126–146, 155–175, 178–198, 224–244, 265–285, 298–318, 334–354, and 367–387; these read AGGV…NSPF, LSLT…LVGL, MLPG…FTAF, GWAV…SLLG, VFLA…IAIF, AEIS…LFVM, GVHA…KAAP, VAFI…FAGL, IMLG…WLAI, LYGV…IGLL, and IGVL…LRLV.

Belongs to the NhaA Na(+)/H(+) (TC 2.A.33) antiporter family.

Its subcellular location is the cell inner membrane. The catalysed reaction is Na(+)(in) + 2 H(+)(out) = Na(+)(out) + 2 H(+)(in). Its function is as follows. Na(+)/H(+) antiporter that extrudes sodium in exchange for external protons. The protein is Na(+)/H(+) antiporter NhaA 1 of Brucella anthropi (strain ATCC 49188 / DSM 6882 / CCUG 24695 / JCM 21032 / LMG 3331 / NBRC 15819 / NCTC 12168 / Alc 37) (Ochrobactrum anthropi).